We begin with the raw amino-acid sequence, 180 residues long: Interleukin-1-binding protein (180 aa).

A signal peptide spans methionine 1–threonine 20. Residues asparagine 80, asparagine 103, and asparagine 113 are each glycosylated (N-linked (GlcNAc...) asparagine; by host).

The protein belongs to the interleukin-1 receptor family. As to quaternary structure, interacts with mouse Il1b.

It localises to the secreted. Functionally, may reduce the host inflammatory response by interacting with inteleukin-1 beta (Il1b) and thus decreasing the association between IL1B and its cellular receptor. This is Interleukin-1-binding protein (OPG201) from Monkeypox virus.